Reading from the N-terminus, the 160-residue chain is Ribosomal RNA large subunit methyltransferase H (160 aa).

Residues L76, G108, and 127–132 (LGKMTW) contribute to the S-adenosyl-L-methionine site.

Belongs to the RNA methyltransferase RlmH family. Homodimer.

The protein resides in the cytoplasm. It catalyses the reaction pseudouridine(1915) in 23S rRNA + S-adenosyl-L-methionine = N(3)-methylpseudouridine(1915) in 23S rRNA + S-adenosyl-L-homocysteine + H(+). Specifically methylates the pseudouridine at position 1915 (m3Psi1915) in 23S rRNA. This Rhizobium etli (strain ATCC 51251 / DSM 11541 / JCM 21823 / NBRC 15573 / CFN 42) protein is Ribosomal RNA large subunit methyltransferase H.